Consider the following 371-residue polypeptide: tRNA-specific 2-thiouridylase MnmA (371 aa).

ATP-binding positions include 16–23 (GMSGGVDS) and M42. An interaction with target base in tRNA region spans residues 102–104 (NPD). The active-site Nucleophile is the C107. A disulfide bridge connects residues C107 and C204. ATP is bound at residue G132. Residues 154–156 (KDQ) are interaction with tRNA. C204 functions as the Cysteine persulfide intermediate in the catalytic mechanism. Positions 316 to 317 (RY) are interaction with tRNA.

The protein belongs to the MnmA/TRMU family.

The protein localises to the cytoplasm. The catalysed reaction is S-sulfanyl-L-cysteinyl-[protein] + uridine(34) in tRNA + AH2 + ATP = 2-thiouridine(34) in tRNA + L-cysteinyl-[protein] + A + AMP + diphosphate + H(+). In terms of biological role, catalyzes the 2-thiolation of uridine at the wobble position (U34) of tRNA, leading to the formation of s(2)U34. The protein is tRNA-specific 2-thiouridylase MnmA of Shewanella piezotolerans (strain WP3 / JCM 13877).